Reading from the N-terminus, the 131-residue chain is Large-conductance mechanosensitive channel (131 aa).

Helical transmembrane passes span 21–41 (VGVI…ADVI) and 76–96 (GMFI…FLMI).

It belongs to the MscL family. Homopentamer.

The protein localises to the cell inner membrane. Functionally, channel that opens in response to stretch forces in the membrane lipid bilayer. May participate in the regulation of osmotic pressure changes within the cell. This Histophilus somni (strain 129Pt) (Haemophilus somnus) protein is Large-conductance mechanosensitive channel.